The following is a 278-amino-acid chain: Tryptophan synthase alpha chain (278 aa).

Active-site proton acceptor residues include glutamate 49 and aspartate 60.

It belongs to the TrpA family. Tetramer of two alpha and two beta chains.

The catalysed reaction is (1S,2R)-1-C-(indol-3-yl)glycerol 3-phosphate + L-serine = D-glyceraldehyde 3-phosphate + L-tryptophan + H2O. It participates in amino-acid biosynthesis; L-tryptophan biosynthesis; L-tryptophan from chorismate: step 5/5. Its function is as follows. The alpha subunit is responsible for the aldol cleavage of indoleglycerol phosphate to indole and glyceraldehyde 3-phosphate. The chain is Tryptophan synthase alpha chain from Rhodopirellula baltica (strain DSM 10527 / NCIMB 13988 / SH1).